The following is a 154-amino-acid chain: Myoglobin (154 aa).

The Globin domain maps to 2 to 148; sequence GLSDGEWQLV…FRKDIAAKYK (147 aa). Serine 4 is subject to Phosphoserine. Position 65 (histidine 65) interacts with nitrite. An O2-binding site is contributed by histidine 65. Phosphothreonine is present on threonine 68. Histidine 94 contributes to the heme b binding site.

Belongs to the globin family. Monomeric.

It is found in the cytoplasm. It localises to the sarcoplasm. The catalysed reaction is Fe(III)-heme b-[protein] + nitric oxide + H2O = Fe(II)-heme b-[protein] + nitrite + 2 H(+). It catalyses the reaction H2O2 + AH2 = A + 2 H2O. In terms of biological role, monomeric heme protein which primary function is to store oxygen and facilitate its diffusion within muscle tissues. Reversibly binds oxygen through a pentacoordinated heme iron and enables its timely and efficient release as needed during periods of heightened demand. Depending on the oxidative conditions of tissues and cells, and in addition to its ability to bind oxygen, it also has a nitrite reductase activity whereby it regulates the production of bioactive nitric oxide. Under stress conditions, like hypoxia and anoxia, it also protects cells against reactive oxygen species thanks to its pseudoperoxidase activity. This chain is Myoglobin (MB), found in Globicephala melas (Long-finned pilot whale).